The primary structure comprises 577 residues: MMDRKQTAETLLTLSPAEVANLKEGINFFRNKTTGKEYILYKEKDHLKACKNLCKHQGGLFMKDIEDLDGRSVKCTKHNWKLDVSTMKYINPPGSFCQDELVIEMDENNGLSLVELNPPNPWDSDPRSPEELAFGEVQITYLTHACMDLKLGDKRMVFDPWLIGPAFARGWWLLHEPPSDWLERLCKADLIYISHMHSDHLSYPTLKQLSQRRPDIPIYVGDTERPVFWNLDQSGVGLTNINVVPFGIWQQVDKSLRFMILMDGVHPEMDTCIIVEYKGHKILNTVDCTRPNGGRLPEKVALMMSDFAGGASGFPMTFSGGKFTEEWKAQFIKAERRKLLNYKAQLVKDLQPRIYCPFAGYFVESHPSDKYIKETNTKNDPNQLNNLIRKNSDVVTWTPRPGAVLDLGRMLKDPTDSKGIVEPPEGTKIYKDSWDFGPYLEILNSAVRDEIFCHSSWIKEYFTWAGFKNYNLVVRMIETDEDFSPFPGGYDYLVDFLDLSFPKERPSREHPYEEIHSRVDVIRYVVKNGLLWDDLYIGFQTRLLRDPDIYHHLFWNHFQIKLPLTPPNWKSFLMHCD.

Residues 1–4 (MMDR) constitute a propeptide that is removed on maturation. Residues 14-112 (LSPAEVANLK…IEMDENNGLS (99 aa)) form the Rieske domain. Residues C54, H56, C75, and H78 each contribute to the [2Fe-2S] cluster site.

The protein belongs to the CMP-Neu5Ac hydroxylase family. Requires [2Fe-2S] cluster as cofactor. In terms of tissue distribution, expressed in all tissues tested, except in brain.

The protein localises to the cytoplasm. Its subcellular location is the endoplasmic reticulum. The enzyme catalyses CMP-N-acetyl-beta-neuraminate + 2 Fe(II)-[cytochrome b5] + O2 + 2 H(+) = CMP-N-glycoloyl-beta-neuraminate + 2 Fe(III)-[cytochrome b5] + H2O. The protein operates within amino-sugar metabolism; N-acetylneuraminate metabolism. Sialic acids are components of carbohydrate chains of glycoconjugates and are involved in cell-cell recognition and cell-pathogen interactions. Catalyzes the conversion of CMP-N-acetylneuraminic acid (CMP-Neu5Ac) into its hydroxylated derivative CMP-N-glycolylneuraminic acid (CMP-Neu5Gc), a sialic acid abundantly expressed at the surface of many cells. The polypeptide is Cytidine monophosphate-N-acetylneuraminic acid hydroxylase (Cmah) (Mus musculus (Mouse)).